We begin with the raw amino-acid sequence, 164 residues long: Thiol peroxidase (164 aa).

Residues Val18–Asn163 form the Thioredoxin domain. Cys60 acts as the Cysteine sulfenic acid (-SOH) intermediate in catalysis. A disulfide bridge links Cys60 with Cys93.

This sequence belongs to the peroxiredoxin family. Tpx subfamily. As to quaternary structure, homodimer.

It catalyses the reaction a hydroperoxide + [thioredoxin]-dithiol = an alcohol + [thioredoxin]-disulfide + H2O. In terms of biological role, thiol-specific peroxidase that catalyzes the reduction of hydrogen peroxide and organic hydroperoxides to water and alcohols, respectively. Plays a role in cell protection against oxidative stress by detoxifying peroxides. This is Thiol peroxidase from Staphylococcus saprophyticus subsp. saprophyticus (strain ATCC 15305 / DSM 20229 / NCIMB 8711 / NCTC 7292 / S-41).